The sequence spans 71 residues: Antimicrobial peptide VpCT4 (71 aa).

Residues 1–23 form the signal peptide; it reads MKTQFVILIVAIVILQLISQSEA. A Leucine amide modification is found at L39. A propeptide spanning residues 40–71 is cleaved from the precursor; the sequence is GKRGVQNMDQFDDIFEPELSEADLRYLQDLLR.

The protein belongs to the non-disulfide-bridged peptide (NDBP) superfamily. Short antimicrobial peptide (group 4) family. In terms of tissue distribution, expressed by the venom gland.

It localises to the secreted. Its subcellular location is the target cell membrane. Functionally, antimicrobial peptide with potent activity against bacteria S.aureus (MIC=9.3 uM), weak activity against E.coli (MIC&gt;100 uM), and weak activity against pathogenic yeasts C.albicans (MIC=100 uM) and C.glabrata (MIC=100 uM). Is not very effective against P.aeruginosa (MIC&gt;300 uM). Also provokes high hemolysis on human erythrocytes (HC(50)=4.8 uM). The chain is Antimicrobial peptide VpCT4 from Mesomexovis punctatus (Scorpion).